Here is a 432-residue protein sequence, read N- to C-terminus: Adenylosuccinate synthetase (432 aa).

Residues 13 to 19 (GDEGKGK) and 41 to 43 (GHT) contribute to the GTP site. The active-site Proton acceptor is the Asp-14. Asp-14 and Gly-41 together coordinate Mg(2+). IMP is bound by residues 14–17 (DEGK), 39–42 (NAGH), Thr-130, Arg-144, Gln-225, Thr-240, and Arg-304. His-42 acts as the Proton donor in catalysis. 300–306 (ATTGRKR) lines the substrate pocket. Residues Arg-306, 332–334 (KLD), and 415–417 (STG) contribute to the GTP site.

The protein belongs to the adenylosuccinate synthetase family. In terms of assembly, homodimer. It depends on Mg(2+) as a cofactor.

It localises to the cytoplasm. The catalysed reaction is IMP + L-aspartate + GTP = N(6)-(1,2-dicarboxyethyl)-AMP + GDP + phosphate + 2 H(+). It functions in the pathway purine metabolism; AMP biosynthesis via de novo pathway; AMP from IMP: step 1/2. Its function is as follows. Plays an important role in the de novo pathway of purine nucleotide biosynthesis. Catalyzes the first committed step in the biosynthesis of AMP from IMP. The sequence is that of Adenylosuccinate synthetase from Photobacterium profundum (strain SS9).